We begin with the raw amino-acid sequence, 490 residues long: Gallate decarboxylase (490 aa).

Asp-165 is a Mn(2+) binding site. Prenylated FMN is bound by residues 168-170 (IHR) and Gly-187. Position 233 (Glu-233) interacts with Mn(2+). Residue Glu-289 is the Proton acceptor of the active site.

This sequence belongs to the UbiD family. Prenylated FMN is required as a cofactor. Mn(2+) serves as cofactor.

The catalysed reaction is 3,4,5-trihydroxybenzoate + H(+) = 1,2,3-trihydroxybenzene + CO2. It carries out the reaction 3,4-dihydroxybenzoate + H(+) = catechol + CO2. Functionally, involved in tannin degradation. Catalyzes the decarboxylation of gallic acid and protocatechuic acid to pyrogallol and catechol, respectively. This chain is Gallate decarboxylase, found in Lactiplantibacillus plantarum (strain ATCC BAA-793 / NCIMB 8826 / WCFS1) (Lactobacillus plantarum).